Consider the following 131-residue polypeptide: Small ribosomal subunit protein uS11 (131 aa).

It belongs to the universal ribosomal protein uS11 family. As to quaternary structure, part of the 30S ribosomal subunit. Interacts with proteins S7 and S18. Binds to IF-3.

Located on the platform of the 30S subunit, it bridges several disparate RNA helices of the 16S rRNA. Forms part of the Shine-Dalgarno cleft in the 70S ribosome. This chain is Small ribosomal subunit protein uS11, found in Helicobacter pylori (strain P12).